Here is a 584-residue protein sequence, read N- to C-terminus: Alkaline nuclease (584 aa).

The disordered stretch occupies residues 409-429 (GGGADHHLRGSPGDSPPPIPF).

The protein belongs to the herpesviridae alkaline nuclease family. In terms of assembly, interacts with major DNA-binding protein; this interaction increases the nuclease processivity of the alkaline exonuclease.

The protein resides in the host nucleus. It localises to the host cytoplasm. Functionally, plays a role in processing non linear or branched viral DNA intermediates in order to promote the production of mature packaged unit-length linear progeny viral DNA molecules. Exhibits endonuclease and exonuclease activities and accepts both double-stranded and single-stranded DNA as substrate. Exonuclease digestion of DNA is in the 5'-&gt; 3' direction and the products are 5'-monophosphate nucleosides. Additionally, forms a recombinase with the major DNA-binding protein, which displays strand exchange activity. In Homo sapiens (Human), this protein is Alkaline nuclease (UL98).